A 605-amino-acid polypeptide reads, in one-letter code: Elongation factor 4 (605 aa).

Positions 9–192 (NRIRNFCIIA…AIVQRIPAPA (184 aa)) constitute a tr-type G domain. Residues 21–26 (DHGKST) and 139–142 (NKID) each bind GTP.

It belongs to the TRAFAC class translation factor GTPase superfamily. Classic translation factor GTPase family. LepA subfamily.

It localises to the cell inner membrane. The catalysed reaction is GTP + H2O = GDP + phosphate + H(+). Its function is as follows. Required for accurate and efficient protein synthesis under certain stress conditions. May act as a fidelity factor of the translation reaction, by catalyzing a one-codon backward translocation of tRNAs on improperly translocated ribosomes. Back-translocation proceeds from a post-translocation (POST) complex to a pre-translocation (PRE) complex, thus giving elongation factor G a second chance to translocate the tRNAs correctly. Binds to ribosomes in a GTP-dependent manner. The protein is Elongation factor 4 of Pelodictyon phaeoclathratiforme (strain DSM 5477 / BU-1).